A 446-amino-acid polypeptide reads, in one-letter code: CBL-interacting serine/threonine-protein kinase 24 (446 aa).

The 254-residue stretch at 11 to 264 folds into the Protein kinase domain; sequence YEVGRTIGEG…IQGIKKDPWF (254 aa). Residues 17–25 and K40 each bind ATP; that span reads IGEGTFAKV. The active-site Proton acceptor is D134. An activation loop region spans residues 152 to 179; sequence DFGLSALPQEGVELLRTTCGTPNYVAPE. S156 is subject to Phosphoserine. Residue T168 is modified to Phosphothreonine. An NAF domain is found at 305-329; that stretch reads EGPLMMNAFEMITLSQGLNLSALFD. Residues 336 to 365 are PPI; it reads KRQTRFVSRREPSEIIANIEAVANSMGFKS.

The protein belongs to the protein kinase superfamily. CAMK Ser/Thr protein kinase family. SNF1 subfamily. As to quaternary structure, interacts with CBL1, CBL2, CBL4/SOS3, CBL5, CBL9, CBL10 and with the protein phosphatase 2C ABI2. It depends on Mn(2+) as a cofactor. In terms of processing, autophosphorylated.

It is found in the cytoplasm. The protein resides in the nucleus. The enzyme catalyses L-seryl-[protein] + ATP = O-phospho-L-seryl-[protein] + ADP + H(+). It carries out the reaction L-threonyl-[protein] + ATP = O-phospho-L-threonyl-[protein] + ADP + H(+). Functionally, involved in the regulatory pathway for the control of intracellular Na(+) and K(+) homeostasis and salt tolerance. Activates the vacuolar H(+)/Ca(2+) antiporter CAX1 and operates in synergy with CBL4/SOS3 to activate the plasma membrane Na(+)/H(+) antiporter SOS1. CIPK serine-threonine protein kinases interact with CBL proteins. Binding of a CBL protein to the regulatory NAF domain of CIPK protein lead to the activation of the kinase in a calcium-dependent manner. Phosphorylates CBL1, CBL4 and CBL10. This Arabidopsis thaliana (Mouse-ear cress) protein is CBL-interacting serine/threonine-protein kinase 24 (CIPK24).